A 420-amino-acid chain; its full sequence is 3-phosphoshikimate 1-carboxyvinyltransferase (420 aa).

Positions 20, 21, and 25 each coordinate 3-phosphoshikimate. Phosphoenolpyruvate is bound at residue Lys20. The phosphoenolpyruvate site is built by Gly90 and Arg118. Ser159, Ser160, Gln161, Ser187, Asp303, and Lys330 together coordinate 3-phosphoshikimate. Gln161 is a phosphoenolpyruvate binding site. Asp303 (proton acceptor) is an active-site residue. Phosphoenolpyruvate contacts are provided by Arg334, Arg376, and Lys402.

This sequence belongs to the EPSP synthase family. In terms of assembly, monomer.

It is found in the cytoplasm. It catalyses the reaction 3-phosphoshikimate + phosphoenolpyruvate = 5-O-(1-carboxyvinyl)-3-phosphoshikimate + phosphate. Its pathway is metabolic intermediate biosynthesis; chorismate biosynthesis; chorismate from D-erythrose 4-phosphate and phosphoenolpyruvate: step 6/7. Catalyzes the transfer of the enolpyruvyl moiety of phosphoenolpyruvate (PEP) to the 5-hydroxyl of shikimate-3-phosphate (S3P) to produce enolpyruvyl shikimate-3-phosphate and inorganic phosphate. This is 3-phosphoshikimate 1-carboxyvinyltransferase from Brachyspira hyodysenteriae (strain ATCC 49526 / WA1).